Reading from the N-terminus, the 514-residue chain is MVVEFKNEPGYDFSVQENVDMFKKALKDVEKELGQDIPLVINGEKIFKDDKIKSINPADTSQVIANASKATKQDVEDAFKAADEAYKSWKTWSANDRAELMLRVSAIIRRRKAEIAAIMVYEAGKPWDEAVGDAAEGIDFIEYYARSMMDLAQGKPVLDREGEHNKYFYKSIGTGVTIPPWNFPFAIMAGTTLAPVVAGNTVLLKPAEDTPYIAYKLMEILEEAGLPKGVVNFVPGDPKEIGDYLVDHKDTHFVTFTGSRATGTRIYERSAVVQEGQNFLKRVIAEMGGKDAIVVDENIDTDMAAEAIVTSAFGFSGQKCSACSRAIVHKDVYDEVLEKSIKLTKELTLGNTVDNTYMGPVINKKQFDKIKNYIEIGKEEGKLEQGGGTDDSKGYFVEPTIISGLKSKDRIMQEEIFGPVVGFVKVNDFDEAIEVANDTDYGLTGAVITNNREHWIKAVNEFDVGNLYLNRGCTSAVVGYHPFGGFKMSGTDAKTGSPDYLLHFLEQKVVSEMF.

Catalysis depends on residues Glu286 and Cys320.

The protein belongs to the aldehyde dehydrogenase family. RocA subfamily.

It catalyses the reaction L-glutamate 5-semialdehyde + NAD(+) + H2O = L-glutamate + NADH + 2 H(+). The protein operates within amino-acid degradation; L-proline degradation into L-glutamate; L-glutamate from L-proline: step 2/2. The protein is 1-pyrroline-5-carboxylate dehydrogenase of Staphylococcus aureus (strain MW2).